The sequence spans 172 residues: MYDAFTRVVSQRDARGEFLSSAQIDALSKLVSDSNKRIDTVNRITGNASAIVTNAARSLFAEQPQLIAPGGNAYTSRRMAACLRDMEIILRYVTYAIFAGDASVLEDRCLNGLRETYLALGTPGSSVAVGVQKMKDEALAIANDTNGITLGDCSALMAEVATYFDRAAAAVA.

Asn72 bears the N4-methylasparagine mark. Positions 82 and 153 each coordinate (2R,3E)-phycocyanobilin.

It belongs to the phycobiliprotein family. Heterodimer of an alpha and a beta subunit, which further assembles into trimers and the trimers into hexamers. Contains two covalently linked bilin chromophores.

It localises to the cellular thylakoid membrane. Light-harvesting photosynthetic bile pigment-protein from the phycobiliprotein complex (phycobilisome, PBS). Phycocyanin is the major phycobiliprotein in the PBS rod. This Synechocystis sp. (strain PCC 6701) protein is C-phycocyanin beta subunit (cpcB).